The chain runs to 406 residues: 4-hydroxy-3-methylbut-2-en-1-yl diphosphate synthase (ferredoxin) (406 aa).

Cys-313, Cys-316, Cys-347, and Glu-354 together coordinate [4Fe-4S] cluster.

It belongs to the IspG family. Requires [4Fe-4S] cluster as cofactor.

It carries out the reaction (2E)-4-hydroxy-3-methylbut-2-enyl diphosphate + 2 oxidized [2Fe-2S]-[ferredoxin] + H2O = 2-C-methyl-D-erythritol 2,4-cyclic diphosphate + 2 reduced [2Fe-2S]-[ferredoxin] + H(+). Its pathway is isoprenoid biosynthesis; isopentenyl diphosphate biosynthesis via DXP pathway; isopentenyl diphosphate from 1-deoxy-D-xylulose 5-phosphate: step 5/6. In terms of biological role, converts 2C-methyl-D-erythritol 2,4-cyclodiphosphate (ME-2,4cPP) into 1-hydroxy-2-methyl-2-(E)-butenyl 4-diphosphate. In Picosynechococcus sp. (strain ATCC 27264 / PCC 7002 / PR-6) (Agmenellum quadruplicatum), this protein is 4-hydroxy-3-methylbut-2-en-1-yl diphosphate synthase (ferredoxin).